We begin with the raw amino-acid sequence, 657 residues long: Chemoreceptor McpA (657 aa).

The Cytoplasmic portion of the chain corresponds to 1 to 5 (MKRIR). The helical transmembrane segment at 6–29 (LVDLPLIIKIGFAPAFALLMLAVM) threads the bilayer. Residues 30-188 (AGGAILVQKS…ESESAKRQAQ (159 aa)) lie on the Periplasmic side of the membrane. Residues 189–212 (ATAAMSVTIIMSLLTLGAVGALAF) traverse the membrane as a helical segment. The Cytoplasmic portion of the chain corresponds to 213-657 (LTVMTTRKSI…APASDGWEEF (445 aa)). HAMP domains are found at residues 216-269 (MTTR…HLEQ) and 297-349 (QEAS…ETMK). The Methyl-accepting transducer domain maps to 354–583 (STDGLSTGAD…QSTAATHSLK (230 aa)). Glutamate methyl ester (Gln) is present on Gln-378. Glutamate methyl ester (Glu) occurs at positions 385 and 392. Residue Gln-574 is modified to Glutamate methyl ester (Gln). Positions 634-657 (ARPGRSSGSAALAQAPASDGWEEF) are disordered.

This sequence belongs to the methyl-accepting chemotaxis (MCP) protein family.

It localises to the cell membrane. Its function is as follows. Chemotactic-signal transducers respond to changes in the concentration of attractants and repellents in the environment, transduce a signal from the outside to the inside of the cell, and facilitate sensory adaptation through the variation of the level of methylation. Attractants increase the level of methylation while repellents decrease the level of methylation. The sequence is that of Chemoreceptor McpA (mcpA) from Caulobacter vibrioides (strain ATCC 19089 / CIP 103742 / CB 15) (Caulobacter crescentus).